Here is a 226-residue protein sequence, read N- to C-terminus: Late expression factor 7 (226 aa).

Residues 9 to 58 (RAKRIRLPLEIIDTILQYLDPILHAKVVGLTTRVKCRLLRDNNVEDYLKL) enclose the F-box domain.

In terms of assembly, interacts with host S-phase kinase-associated protein 1/SKP1.

The protein resides in the host nucleus. It functions in the pathway protein degradation; proteasomal ubiquitin-dependent pathway. Its function is as follows. F-box protein that manipulates the host DNA damage response (DRR) in order to promote viral multiplication. Acts as a substrate recognition component of SKP1/Cullin/F-box (SCF) complexes for targeted protein polyubiquitination. This Lepidoptera (butterflies and moths) protein is Late expression factor 7 (LEF-7).